The sequence spans 351 residues: Nuclear inhibitor of protein phosphatase 1 (351 aa).

Residues 1–142 (MAAAANSGSS…LPSAVKGDEK (142 aa)) form an interaction with CDC5L, SF3B1 and MELK region. Residues 49-101 (YLFGRNPDLCDFTIDHQSCSRVHAALVYHKHLKRVFLIDLNSTHGTFLGHIRL) form the FHA domain. An interaction with EED region spans residues 143 to 224 (MGGEDDELKG…VDPSVGRFRN (82 aa)). Residue threonine 161 is modified to Phosphothreonine. 2 positions are modified to phosphoserine: serine 178 and serine 199. 2 short sequence motifs (nuclear localization signal) span residues 185-209 (GNLD…DDEI) and 210-240 (INPE…RVEG). Residues 191–200 (RPKRKRKNSR) are involved in PP-1 inhibition. The involved in PP-1 binding stretch occupies residues 200–203 (RVTF). Serine 204 is modified (phosphoserine). The residue at position 249 (serine 249) is a Phosphoserine. Position 264 is a phosphotyrosine; by LYN; in vitro (tyrosine 264). Residues 310-329 (AVNMNPAPNPAVYNPEAVNE) are interaction with EED. A disordered region spans residues 316–351 (APNPAVYNPEAVNEPKKKKYAKEAWPGKKPTPSLLI). An RNA-binding region spans residues 330–351 (PKKKKYAKEAWPGKKPTPSLLI). The involved in PP-1 inhibition stretch occupies residues 331–337 (KKKKYAK). Phosphotyrosine is present on tyrosine 335.

Interacts with phosphorylated CDC5L, SF3B1 and MELK. Interacts with EED, in a nucleic acid-stimulated manner. Part of a complex consisting of PPP1R8, EED, HDAC2 and PP-1. Part of the spliceosome. Interacts with PPP1CA, PPP1CB and PPP1CC. Mg(2+) is required as a cofactor. Post-translationally, may be inactivated by phosphorylation on Ser-199 or Ser-204. Phosphorylated by Lyn in vitro on Tyr-264, and also on Tyr-335 in the presence of RNA. As to expression, ubiquitously expressed, with highest levels in heart and skeletal muscle, followed by brain, placenta, lung, liver and pancreas. Less abundant in kidney. The concentration and ratio between isoforms is cell-type dependent. Isoform Alpha (&gt;90%) and isoform Beta were found in brain, heart and kidney. Isoform Gamma is mainly found in B-cells and T-lymphocytes, and has been found in 293 embryonic kidney cells.

Its subcellular location is the nucleus. The protein resides in the nucleus speckle. It localises to the cytoplasm. Inhibitor subunit of the major nuclear protein phosphatase-1 (PP-1). It has RNA-binding activity but does not cleave RNA and may target PP-1 to RNA-associated substrates. May also be involved in pre-mRNA splicing. Binds DNA and might act as a transcriptional repressor. Seems to be required for cell proliferation. Functionally, isoform Gamma is a site-specific single-strand endoribonuclease that cleaves single strand RNA 3' to purines and pyrimidines in A+U-rich regions. It generates 5'-phosphate termini at the site of cleavage. This isoform does not inhibit PP-1. May be implicated in mRNA splicing. The polypeptide is Nuclear inhibitor of protein phosphatase 1 (PPP1R8) (Homo sapiens (Human)).